Here is a 512-residue protein sequence, read N- to C-terminus: Centrosomal protein CCDC61 (512 aa).

Met-1 is modified (N-acetylmethionine). The head domain stretch occupies residues 1–142; that stretch reads MEQPAGLQVD…PLPLPYQGKP (142 aa). 2 coiled-coil regions span residues 176–203 and 246–273; these read WHLR…REEA and RRLA…NCEL. A Phosphothreonine modification is found at Thr-282. Disordered stretches follow at residues 282 to 415 and 430 to 472; these read TLPA…SFRS and SQSV…HLAS. Over residues 287–300 the composition is skewed to basic and acidic residues; that stretch reads AREDRALSSRERST. Phosphoserine occurs at positions 328, 330, 372, and 375. Over residues 406–415 the composition is skewed to low complexity; that stretch reads RSSSVDSFRS. Ser-447 and Ser-473 each carry phosphoserine.

Belongs to the CCDC61 family. Forms homodimers (via head domain). Interacts with CEP170. Interacts with PCM1 and CEP131. Binds tubulin.

It is found in the cytoplasm. Its subcellular location is the cytoskeleton. The protein resides in the microtubule organizing center. It localises to the centrosome. The protein localises to the centriolar satellite. It is found in the cilium basal body. In terms of biological role, microtubule-binding centrosomal protein required for centriole cohesion, independently of the centrosome-associated protein/CEP250 and rootletin/CROCC linker. In interphase, required for anchoring microtubule at the mother centriole subdistal appendages and for centrosome positioning. During mitosis, may be involved in spindle assembly and chromatin alignment by regulating the organization of spindle microtubules into a symmetrical structure. Plays a non-essential role in ciliogenesis. This chain is Centrosomal protein CCDC61, found in Rattus norvegicus (Rat).